Reading from the N-terminus, the 65-residue chain is Large ribosomal subunit protein bL35 (65 aa).

The interval Met1–Gln26 is disordered.

It belongs to the bacterial ribosomal protein bL35 family.

The protein is Large ribosomal subunit protein bL35 of Oenococcus oeni (strain ATCC BAA-331 / PSU-1).